A 474-amino-acid polypeptide reads, in one-letter code: Vitamin D-binding protein (474 aa).

The first 16 residues, 1-16 (MKRILVFLLAVAFVHA), serve as a signal peptide directing secretion. 3 Albumin domains span residues 17–208 (LERG…QLKH), 209–393 (FSLL…QLTR), and 394–474 (ELSS…TLQS). Intrachain disulfides connect Cys-29-Cys-75 and Cys-74-Cys-83. An N-linked (GlcNAc...) asparagine glycan is attached at Asn-86. Intrachain disulfides connect Cys-96–Cys-112, Cys-111–Cys-122, Cys-145–Cys-190, Cys-189–Cys-198, Cys-220–Cys-266, Cys-265–Cys-273, Cys-285–Cys-299, Cys-298–Cys-310, Cys-334–Cys-375, Cys-374–Cys-383, Cys-406–Cys-452, and Cys-451–Cys-461. An N-linked (GlcNAc...) asparagine glycan is attached at Asn-287.

Belongs to the ALB/AFP/VDB family. In terms of assembly, associates with membrane-bound immunoglobulin on the surface of B-lymphocytes and with IgG Fc receptor on the membranes of T-lymphocytes. Interacts with LRP2; the interaction is required for renal uptake of GC in complex with 25-hydroxyvitamin D3.

Its subcellular location is the secreted. In terms of biological role, involved in vitamin D transport and storage, scavenging of extracellular G-actin, enhancement of the chemotactic activity of C5 alpha for neutrophils in inflammation and macrophage activation. This chain is Vitamin D-binding protein (GC), found in Bos taurus (Bovine).